A 175-amino-acid polypeptide reads, in one-letter code: Transcription factor E (175 aa).

The HTH TFE/IIEalpha-type domain maps to glutamate 3 to proline 88.

This sequence belongs to the TFE family. In terms of assembly, monomer. Interaction with RNA polymerase subunits RpoF and RpoE is necessary for Tfe stimulatory transcription activity. Able to interact with Tbp and RNA polymerase in the absence of DNA promoter. Interacts both with the preinitiation and elongation complexes.

Functionally, transcription factor that plays a role in the activation of archaeal genes transcribed by RNA polymerase. Facilitates transcription initiation by enhancing TATA-box recognition by TATA-box-binding protein (Tbp), and transcription factor B (Tfb) and RNA polymerase recruitment. Not absolutely required for transcription in vitro, but particularly important in cases where Tbp or Tfb function is not optimal. It dynamically alters the nucleic acid-binding properties of RNA polymerases by stabilizing the initiation complex and destabilizing elongation complexes. Seems to translocate with the RNA polymerase following initiation and acts by binding to the non template strand of the transcription bubble in elongation complexes. This chain is Transcription factor E, found in Methanococcus maripaludis (strain DSM 14266 / JCM 13030 / NBRC 101832 / S2 / LL).